The following is a 179-amino-acid chain: Viral interleukin-10 homolog (179 aa).

Residues 1–18 (MFRASLLCCLVLLAGVWA) form the signal peptide. 2 disulfides stabilise this stretch: Cys30/Cys127 and Cys80/Cys133. Asn100 and Asn135 each carry an N-linked (GlcNAc...) asparagine; by host glycan.

Belongs to the IL-10 family.

The protein localises to the secreted. In terms of biological role, down-regulates the expression of the TAP1 gene (transporter associated with antigen processing), thereby affecting the transport of peptides into the endoplasmic reticulum and subsequent peptide loading by MHC class I molecules. In consequence, infected cells are masked for immune recognition by cytotoxic T-lymphocytes. This Equus caballus (Horse) protein is Viral interleukin-10 homolog.